Here is a 1135-residue protein sequence, read N- to C-terminus: APC membrane recruitment protein 1 (1135 aa).

The residue at position 1 (methionine 1) is an N-acetylmethionine. Disordered regions lie at residues 1–115 (METQ…EGTG), 156–308 (AEKF…VGDP), 339–405 (SMTD…EDDD), 447–484 (GLAP…DDSG), 736–764 (NFGG…KEGN), 921–948 (LQAQ…PLSL), and 1007–1135 (VPES…NLAK). Residues 10–19 (QAKGAAASGS) show a composition bias toward low complexity. The segment covering 23 to 35 (QTAEKGAKNKAAE) has biased composition (basic and acidic residues). The segment covering 36 to 50 (ATEGPTSEPSSSGPG) has biased composition (low complexity). Gly residues predominate over residues 73 to 83 (FGGGRSKGSGK). 2 stretches are compositionally biased toward basic and acidic residues: residues 94–107 (KTHD…HGPE) and 196–208 (GPER…HEHV). A compositionally biased stretch (pro residues) spans 238 to 248 (KVSPTPEPSPP). Serine 246 is subject to Phosphoserine. 2 stretches are compositionally biased toward basic and acidic residues: residues 253–262 (MACKDPEKPM) and 282–291 (EEPHSPETGE). Over residues 373–405 (ALPDDDDEEEEEEEEVELEEEEEEVKEEEEDDD) the composition is skewed to acidic residues. Positions 455 to 466 (TPQSDQQESAPN) are enriched in polar residues. Over residues 926–938 (EDSDEEDEEEEEG) the composition is skewed to acidic residues. Positions 1058-1069 (PSCSSSSGGFSP) are enriched in low complexity. Polar residues predominate over residues 1119–1135 (SLATSYSSTAMNGNLAK).

This sequence belongs to the Amer family. In terms of assembly, interacts with CTNNB1, AXIN1, LRP6, KEAP1, APC and BTRC. Interacts with SCF (SKP1-CUL1-F-box protein) E3 ubiquitin-protein ligase complexes containing BTRC and/or FBXW11. Identified in the beta-catenin destruction complex containing CTNNB1, APC, AXIN1 and AXIN2. Interacts with WT1. Detected in fetal and adult kidney, brain and spleen.

Its subcellular location is the cytoplasm. The protein resides in the cell membrane. It is found in the nucleus. In terms of biological role, regulator of the canonical Wnt signaling pathway. Acts by specifically binding phosphatidylinositol 4,5-bisphosphate (PtdIns(4,5)P2), translocating to the cell membrane and interacting with key regulators of the canonical Wnt signaling pathway, such as components of the beta-catenin destruction complex. Acts both as a positive and negative regulator of the Wnt signaling pathway, depending on the context: acts as a positive regulator by promoting LRP6 phosphorylation. Also acts as a negative regulator by acting as a scaffold protein for the beta-catenin destruction complex and promoting stabilization of Axin at the cell membrane. Promotes CTNNB1 ubiquitination and degradation. Involved in kidney development. The chain is APC membrane recruitment protein 1 (AMER1) from Homo sapiens (Human).